Here is a 554-residue protein sequence, read N- to C-terminus: MFSVQRPPLTRTVVRMGLATLLPKTACLAGLNVALVFLLFQVQDGTGITLGPSKLDSKPTSLDSQQHVADKRWLATVGHYKHLAGATESTRDVSLLEERAQHRVNAQETNQRRTIFQRLLNLLRRRERDGEVSGSAADSSSRPRLSVRQRLAQLWRRAKSLFKRGIRRYFPQGRNRQRSLRAQRRRSELVFEKADSGCVIGKRILAHMQEQIGQPQALENSERLDRILTVAAWPPDVPKRFVSVTTGETRTLVRGAPLGSGGFATVYEATDVETNEELAVKVFMSEKEPTDETMLDLQRESSCYRNFSLAKTAKDAQESCRFMVPSDVVMLEGQPASTEVVIGLTTRWVPNYFLLMMRAEADMSKVISWVFGDASVNKSEFGLVVRMYLSSQAIKLVANVQAQGIVHTDIKPANFLLLKDGRLFLGDFGTYRINNSVGRAIGTPGYEPPERPFQATGITYTFPTDAWQLGITLYCIWCKERPTPADGIWDYLHFADCPSTPELVQDLIRSLLNRDPQKRMLPLQALETAAFKEMDSVVKGAAQNFEQQEHLHTE.

The chain crosses the membrane as a helical span at residues 17–40 (GLATLLPKTACLAGLNVALVFLLF). Positions 252-531 (LVRGAPLGSG…PLQALETAAF (280 aa)) constitute a Protein kinase domain. 3 residues coordinate ATP: glycine 262, alanine 264, and lysine 281. The N-linked (GlcNAc...) asparagine glycan is linked to asparagine 306. 3 residues coordinate ATP: methionine 357, alanine 359, and aspartate 362. Asparagine 377 carries an N-linked (GlcNAc...) asparagine glycan. Residue aspartate 409 is the Proton acceptor of the active site. Aspartate 427 contacts ATP. Aspartate 427 contributes to the Mg(2+) binding site. N-linked (GlcNAc...) asparagine glycosylation is present at asparagine 434. Cysteine 478 and cysteine 497 are disulfide-bonded.

Belongs to the protein kinase superfamily. Ser/Thr protein kinase family. Component of a complex at least composed of ROP18, GRA7 and ROP2. Component of a complex at least composed of ROP18 and ROP5. Interacts with GRA7 in the absence of ROP5. Interacts with mouse IRGB6 (TGTP1/TGTP2).

The protein localises to the parasitophorous vacuole membrane. The protein resides in the cytoplasmic vesicle. It is found in the secretory vesicle. Its subcellular location is the rhoptry. The catalysed reaction is L-threonyl-[protein] + ATP = O-phospho-L-threonyl-[protein] + ADP + H(+). The enzyme catalyses L-seryl-[protein] + ATP = O-phospho-L-seryl-[protein] + ADP + H(+). Its activity is regulated as follows. Kinase activity is enhanced by polymorphic pseudokinase ROP5. In terms of biological role, protein kinase. Virulence factor. Mediates parasite survival in mouse macrophages and monocytes. Reduces the accumulation of mouse IRGA6 (IIGP1) and IRGB6 (TGTP1/TGTP2), immunity-related GTPases (IRGs) that protect mice from infection by certain intracellular pathogens, on the parasitophorous vacuole and IRG-mediated killing of parasites by mouse cells; probably in connection with ROP5. In complex with GRA7, targets IRGs to prevent IRG-mediated parasite killing by mouse cells. Phosphorylates mouse IRGA6 (IIGP1); its activity toward mouse IRGA6 is promoted by GRA7 or ROP5. Phosphorylates mouse IRGB6 (TGTP1/TGTP2). Phosphorylates mouse IRGB10 (GM12250). Does not affect IFN-gamma (IFNG)-mediated parasite killing in human cells that do not possess the large variety of IRGs. This Toxoplasma gondii protein is Serine/threonine-protein kinase ROP18.